The following is a 500-amino-acid chain: Glycerol kinase (500 aa).

Residue Thr-11 coordinates ADP. The ATP site is built by Thr-11, Thr-12, and Ser-13. Thr-11 is a sn-glycerol 3-phosphate binding site. Arg-15 is an ADP binding site. Sn-glycerol 3-phosphate-binding residues include Arg-81, Glu-82, Tyr-133, and Asp-242. Arg-81, Glu-82, Tyr-133, Asp-242, and Gln-243 together coordinate glycerol. ADP-binding residues include Thr-264 and Gly-307. Thr-264, Gly-307, Gln-311, and Gly-411 together coordinate ATP. Gly-411 is a binding site for ADP.

This sequence belongs to the FGGY kinase family.

It carries out the reaction glycerol + ATP = sn-glycerol 3-phosphate + ADP + H(+). Its pathway is polyol metabolism; glycerol degradation via glycerol kinase pathway; sn-glycerol 3-phosphate from glycerol: step 1/1. Inhibited by fructose 1,6-bisphosphate (FBP). Functionally, key enzyme in the regulation of glycerol uptake and metabolism. Catalyzes the phosphorylation of glycerol to yield sn-glycerol 3-phosphate. In Rhodopseudomonas palustris (strain BisA53), this protein is Glycerol kinase.